Here is a 234-residue protein sequence, read N- to C-terminus: 7-carboxy-7-deazaguanine synthase (234 aa).

The interval 1–28 is disordered; that stretch reads MPLNCDTKTAGEISSSIPSGSGSHQPAA. A compositionally biased stretch (low complexity) spans 13–23; that stretch reads ISSSIPSGSGS. Residues 42-44 and Arg57 contribute to the substrate site; that span reads LQG. Positions 48–234 constitute a Radical SAM core domain; that stretch reads TSGYPTIFIR…LQLHKFIGLP (187 aa). Residues Cys61, Cys65, and Cys68 each contribute to the [4Fe-4S] cluster site. Thr70 provides a ligand contact to Mg(2+). A substrate-binding site is contributed by Thr100. Gly102 lines the S-adenosyl-L-methionine pocket. Pro234 is a binding site for substrate.

The protein belongs to the radical SAM superfamily. 7-carboxy-7-deazaguanine synthase family. In terms of assembly, homodimer. [4Fe-4S] cluster is required as a cofactor. Requires S-adenosyl-L-methionine as cofactor. It depends on Mg(2+) as a cofactor.

The enzyme catalyses 6-carboxy-5,6,7,8-tetrahydropterin + H(+) = 7-carboxy-7-deazaguanine + NH4(+). The protein operates within purine metabolism; 7-cyano-7-deazaguanine biosynthesis. Its function is as follows. Catalyzes the complex heterocyclic radical-mediated conversion of 6-carboxy-5,6,7,8-tetrahydropterin (CPH4) to 7-carboxy-7-deazaguanine (CDG), a step common to the biosynthetic pathways of all 7-deazapurine-containing compounds. This is 7-carboxy-7-deazaguanine synthase from Methanospirillum hungatei JF-1 (strain ATCC 27890 / DSM 864 / NBRC 100397 / JF-1).